The primary structure comprises 118 residues: Small ribosomal subunit protein uS13 (118 aa).

Residues 94-118 (SLPLRGQRTKTNARTRKGPRKAIKK) are disordered.

The protein belongs to the universal ribosomal protein uS13 family. In terms of assembly, part of the 30S ribosomal subunit. Forms a loose heterodimer with protein S19. Forms two bridges to the 50S subunit in the 70S ribosome.

Located at the top of the head of the 30S subunit, it contacts several helices of the 16S rRNA. In the 70S ribosome it contacts the 23S rRNA (bridge B1a) and protein L5 of the 50S subunit (bridge B1b), connecting the 2 subunits; these bridges are implicated in subunit movement. Contacts the tRNAs in the A and P-sites. The polypeptide is Small ribosomal subunit protein uS13 (Pseudoalteromonas atlantica (strain T6c / ATCC BAA-1087)).